Reading from the N-terminus, the 221-residue chain is Leucine rich adaptor protein 1-like (221 aa).

M1 is modified (N-acetylmethionine). Residues 1–81 (MEDGPLPDLR…SGSPRRSHPS (81 aa)) form a disordered region. Basic and acidic residues-rich tracts occupy residues 8–21 (DLRDIELKLGRKVP) and 28–39 (LRGEEPAPREGA). Residues 48–75 (SCSSSSSCSSFAPSVSSSSSSSPASGSP) show a composition bias toward low complexity.

The chain is Leucine rich adaptor protein 1-like (Lurap1l) from Rattus norvegicus (Rat).